Consider the following 392-residue polypeptide: NAD(P)H-quinone oxidoreductase subunit H (392 aa).

This sequence belongs to the complex I 49 kDa subunit family. NDH-1 can be composed of about 15 different subunits; different subcomplexes with different compositions have been identified which probably have different functions.

Its subcellular location is the cellular thylakoid membrane. The enzyme catalyses a plastoquinone + NADH + (n+1) H(+)(in) = a plastoquinol + NAD(+) + n H(+)(out). It carries out the reaction a plastoquinone + NADPH + (n+1) H(+)(in) = a plastoquinol + NADP(+) + n H(+)(out). Its function is as follows. NDH-1 shuttles electrons from an unknown electron donor, via FMN and iron-sulfur (Fe-S) centers, to quinones in the respiratory and/or the photosynthetic chain. The immediate electron acceptor for the enzyme in this species is believed to be plastoquinone. Couples the redox reaction to proton translocation, and thus conserves the redox energy in a proton gradient. Cyanobacterial NDH-1 also plays a role in inorganic carbon-concentration. This Synechococcus sp. (strain JA-2-3B'a(2-13)) (Cyanobacteria bacterium Yellowstone B-Prime) protein is NAD(P)H-quinone oxidoreductase subunit H.